Here is a 191-residue protein sequence, read N- to C-terminus: Heme-binding protein 1 (191 aa).

This sequence belongs to the HEBP family. As to quaternary structure, monomer.

The protein localises to the cytoplasm. Its function is as follows. May bind free porphyrinogens that may be present in the cell and thus facilitate removal of these potentially toxic compound. Binds with a high affinity to one molecule of heme or porphyrins. It binds metalloporphyrins, free porphyrins and N-methylprotoporphyrin with similar affinities. This chain is Heme-binding protein 1 (HEBP1), found in Bos taurus (Bovine).